The following is a 272-amino-acid chain: Interleukin-2 receptor subunit alpha (272 aa).

Residues Met-1–Ala-21 form the signal peptide. The Sushi 1 domain occupies Glu-22–Ser-84. Residues Glu-22–Gln-240 are Extracellular-facing. 3 cysteine pairs are disulfide-bonded: Cys-24–Cys-67, Cys-49–Cys-80, and Cys-51–Cys-82. Asn-70 and Asn-89 each carry an N-linked (GlcNAc...) asparagine glycan. Residues Ala-87–Pro-98 show a composition bias toward polar residues. A disordered region spans residues Ala-87 to Met-109. Residues Gly-123 to Gly-186 enclose the Sushi 2 domain. 2 disulfides stabilise this stretch: Cys-125/Cys-168 and Cys-152/Cys-184. The tract at residues Gly-186–Arg-213 is disordered. Residues Val-241 to Leu-259 traverse the membrane as a helical segment. The Cytoplasmic portion of the chain corresponds to Thr-260–Ile-272.

As to quaternary structure, non-covalent dimer of an alpha and a beta subunit. IL2R exists in 3 different forms: a high affinity dimer, an intermediate affinity monomer (beta subunit), and a low affinity monomer (alpha subunit). The high and intermediate affinity forms also associate with a gamma subunit.

It localises to the membrane. Its function is as follows. Receptor for interleukin-2. The receptor is involved in the regulation of immune tolerance by controlling regulatory T cells (TREGs) activity. TREGs suppress the activation and expansion of autoreactive T-cells. This is Interleukin-2 receptor subunit alpha (IL2RA) from Macaca mulatta (Rhesus macaque).